The following is a 111-amino-acid chain: uncharacterized protein (111 aa).

Residues Ala12 to Asp34 are disordered. The interval Pro71–Thr76 is required for interaction with PPP3CA. Phosphothreonine occurs at positions 79 and 81.

In terms of assembly, interacts (via PxIxIT motif, when phosphorylated on Thr-79) with PPP3CA.

This is an uncharacterized protein from Mus musculus (Mouse).